A 251-amino-acid chain; its full sequence is Small ribosomal subunit protein uS3 (251 aa).

Positions 22-93 (LNEFFTRELA…GIAIYAERVE (72 aa)) constitute a KH type-2 domain. The tract at residues 223–251 (TVKSYKQTAEDETETDAPVEAEAEVEATA) is disordered. A compositionally biased stretch (acidic residues) spans 232–251 (EDETETDAPVEAEAEVEATA).

This sequence belongs to the universal ribosomal protein uS3 family. In terms of assembly, component of the small ribosomal subunit. Mature ribosomes consist of a small (40S) and a large (60S) subunit. The 40S subunit contains about 32 different proteins and 1 molecule of RNA (18S). The 60S subunit contains 45 different proteins and 3 molecules of RNA (25S, 5.8S and 5S).

It localises to the cytoplasm. In terms of biological role, component of the ribosome, a large ribonucleoprotein complex responsible for the synthesis of proteins in the cell. The small ribosomal subunit (SSU) binds messenger RNAs (mRNAs) and translates the encoded message by selecting cognate aminoacyl-transfer RNA (tRNA) molecules. The large subunit (LSU) contains the ribosomal catalytic site termed the peptidyl transferase center (PTC), which catalyzes the formation of peptide bonds, thereby polymerizing the amino acids delivered by tRNAs into a polypeptide chain. The nascent polypeptides leave the ribosome through a tunnel in the LSU and interact with protein factors that function in enzymatic processing, targeting, and the membrane insertion of nascent chains at the exit of the ribosomal tunnel. The polypeptide is Small ribosomal subunit protein uS3 (RPS3) (Candida albicans (strain SC5314 / ATCC MYA-2876) (Yeast)).